Reading from the N-terminus, the 458-residue chain is Bifunctional protein GlmU (458 aa).

The segment at 1–229 (MTNYAIILAA…FNESLGVNDR (229 aa)) is pyrophosphorylase. UDP-N-acetyl-alpha-D-glucosamine is bound by residues 8–11 (LAAG), Lys-22, Gln-72, and 77–78 (GT). Mg(2+) is bound at residue Asp-102. The UDP-N-acetyl-alpha-D-glucosamine site is built by Gly-139, Glu-154, Asn-169, and Asn-227. A Mg(2+)-binding site is contributed by Asn-227. The segment at 230–250 (VALATAESVMRRRINKAHMIN) is linker. The N-acetyltransferase stretch occupies residues 251 to 458 (GVTFQNPDAT…AKRLPHYPQK (208 aa)). Residues Arg-332 and Lys-350 each contribute to the UDP-N-acetyl-alpha-D-glucosamine site. Catalysis depends on His-362, which acts as the Proton acceptor. Positions 365 and 376 each coordinate UDP-N-acetyl-alpha-D-glucosamine. Acetyl-CoA is bound by residues Ala-379, 385–386 (NY), Ser-404, Ala-422, and Arg-439.

This sequence in the N-terminal section; belongs to the N-acetylglucosamine-1-phosphate uridyltransferase family. In the C-terminal section; belongs to the transferase hexapeptide repeat family. As to quaternary structure, homotrimer. Requires Mg(2+) as cofactor.

Its subcellular location is the cytoplasm. The catalysed reaction is alpha-D-glucosamine 1-phosphate + acetyl-CoA = N-acetyl-alpha-D-glucosamine 1-phosphate + CoA + H(+). It catalyses the reaction N-acetyl-alpha-D-glucosamine 1-phosphate + UTP + H(+) = UDP-N-acetyl-alpha-D-glucosamine + diphosphate. It participates in nucleotide-sugar biosynthesis; UDP-N-acetyl-alpha-D-glucosamine biosynthesis; N-acetyl-alpha-D-glucosamine 1-phosphate from alpha-D-glucosamine 6-phosphate (route II): step 2/2. Its pathway is nucleotide-sugar biosynthesis; UDP-N-acetyl-alpha-D-glucosamine biosynthesis; UDP-N-acetyl-alpha-D-glucosamine from N-acetyl-alpha-D-glucosamine 1-phosphate: step 1/1. It functions in the pathway bacterial outer membrane biogenesis; LPS lipid A biosynthesis. Catalyzes the last two sequential reactions in the de novo biosynthetic pathway for UDP-N-acetylglucosamine (UDP-GlcNAc). The C-terminal domain catalyzes the transfer of acetyl group from acetyl coenzyme A to glucosamine-1-phosphate (GlcN-1-P) to produce N-acetylglucosamine-1-phosphate (GlcNAc-1-P), which is converted into UDP-GlcNAc by the transfer of uridine 5-monophosphate (from uridine 5-triphosphate), a reaction catalyzed by the N-terminal domain. This chain is Bifunctional protein GlmU, found in Streptococcus uberis (strain ATCC BAA-854 / 0140J).